The primary structure comprises 465 residues: GTPase Der (465 aa).

EngA-type G domains lie at 3–167 and 179–352; these read PLVA…PEEG and VRIA…ASAT. GTP-binding positions include 9 to 16, 57 to 61, 119 to 122, 185 to 192, 232 to 236, and 297 to 300; these read GRPNVGKS, DTGGI, NKID, DTAGL, and NKWD. Residues 353-437 form the KH-like domain; that stretch reads HEFSTSEVNQ…PVRFIFREGA (85 aa).

This sequence belongs to the TRAFAC class TrmE-Era-EngA-EngB-Septin-like GTPase superfamily. EngA (Der) GTPase family. As to quaternary structure, associates with the 50S ribosomal subunit.

Its function is as follows. GTPase that plays an essential role in the late steps of ribosome biogenesis. The polypeptide is GTPase Der (Xanthomonas campestris pv. campestris (strain 8004)).